We begin with the raw amino-acid sequence, 279 residues long: uncharacterized protein (279 aa).

3 helical membrane-spanning segments follow: residues 31 to 51 (GYIAQALGIADVLAVAYFHAT), 67 to 87 (LLSIGHYAIALYAALIEAKII), and 115 to 135 (EITGGSLGHGLGIAVGMSLAL).

The protein belongs to the transketolase family. It depends on thiamine diphosphate as a cofactor.

Its subcellular location is the cell membrane. This is an uncharacterized protein from Sinorhizobium fredii (strain NBRC 101917 / NGR234).